We begin with the raw amino-acid sequence, 300 residues long: MKQYLITGGTGMVGSQLVNEIKKSDSHITILTRHDQISNDKKISYVNWAKSGWEHKVPQNIDVVINLAGATLNKRWTPEYKQTLMLSRIQSTQALYELFKSRNKAPKALFNASATGYYPPDLFMSYTEVYKTLPFDFLSDIVYQWERFAQQFEQLGTRVVIGRFGIILSNEGGALQTMKLPYEYYIGGKLGSGQQWYSWIHINDLIQAILFLINNESASGPFNLTAPIPERQNLFGYTLARAMHKPHETWAPSLAMRLILGQMSTVVLDTQKVLPNKIQALGFQFKYSNLKMALEDLIKE.

The protein belongs to the NAD(P)-dependent epimerase/dehydratase family. SDR39U1 subfamily.

This chain is Epimerase family protein SACOL0834, found in Staphylococcus aureus (strain COL).